A 378-amino-acid polypeptide reads, in one-letter code: Glutamate 5-kinase (378 aa).

ATP is bound at residue Lys-14. The substrate site is built by Ser-54, Asp-141, and Asn-153. Position 173–174 (173–174) interacts with ATP; that stretch reads SD. Residues 279–356 form the PUA domain; that stretch reads AGRLTVDAGA…DEISAILGYD (78 aa).

This sequence belongs to the glutamate 5-kinase family.

It localises to the cytoplasm. It catalyses the reaction L-glutamate + ATP = L-glutamyl 5-phosphate + ADP. It functions in the pathway amino-acid biosynthesis; L-proline biosynthesis; L-glutamate 5-semialdehyde from L-glutamate: step 1/2. Catalyzes the transfer of a phosphate group to glutamate to form L-glutamate 5-phosphate. This chain is Glutamate 5-kinase, found in Brucella abortus (strain S19).